Reading from the N-terminus, the 511-residue chain is UDP-N-acetylmuramate--L-alanine ligase (511 aa).

127–133 (GTHGKTT) is a binding site for ATP. The interval 481-511 (VGTVPGGEVGGATTIGGTVPGGSAPGASAAG) is disordered. The segment covering 484 to 504 (VPGGEVGGATTIGGTVPGGSA) has biased composition (gly residues).

This sequence belongs to the MurCDEF family.

The protein localises to the cytoplasm. The catalysed reaction is UDP-N-acetyl-alpha-D-muramate + L-alanine + ATP = UDP-N-acetyl-alpha-D-muramoyl-L-alanine + ADP + phosphate + H(+). The protein operates within cell wall biogenesis; peptidoglycan biosynthesis. In terms of biological role, cell wall formation. The polypeptide is UDP-N-acetylmuramate--L-alanine ligase (Salinispora arenicola (strain CNS-205)).